A 275-amino-acid polypeptide reads, in one-letter code: Putative methylglyoxal reductase DkgA (275 aa).

The active-site Proton donor is the Tyr-51. His-107 contacts substrate. Position 187–241 (187–241 (SPLAQGGEGVFDQKVIRELADKYGKTPAQIVIRWHLDCGLVVIPKSVTPSRIAEN)) interacts with NADP(+).

It belongs to the aldo/keto reductase family. In terms of assembly, monomer.

It is found in the cytoplasm. The enzyme catalyses hydroxyacetone + NADP(+) = methylglyoxal + NADPH + H(+). Its function is as follows. Aldo-keto reductase that significantly contributes to cellular methylglyoxal detoxification by catalyzing the NADPH-dependent conversion of methylglyoxal to acetol. The polypeptide is Putative methylglyoxal reductase DkgA (Salmonella typhi).